The sequence spans 109 residues: Cytochrome c oxidase subunit 6A1, mitochondrial (109 aa).

The transit peptide at 1 to 24 directs the protein to the mitochondrion; the sequence is MAAAAGSRVFGLLGRSRLQLSRCM. Residues 25 to 34 lie on the Mitochondrial matrix side of the membrane; it reads SSGAHGEEGS. A helical membrane pass occupies residues 35–59; it reads ARMWKALTYFVALPGVGVSMLNVFL. Topologically, residues 60 to 109 are mitochondrial intermembrane; that stretch reads KSHHGEEERPEFVAYPHLRIRSKPFPWGDGNHTLFHNPHVNPLPTGYEDE.

This sequence belongs to the cytochrome c oxidase subunit 6A family. Component of the cytochrome c oxidase (complex IV, CIV), a multisubunit enzyme composed of 14 subunits. The complex is composed of a catalytic core of 3 subunits MT-CO1, MT-CO2 and MT-CO3, encoded in the mitochondrial DNA, and 11 supernumerary subunits COX4I1 (or COX4I2), COX5A, COX5B, COX6A2 (or COX6A1), COX6B1 (or COX6B2), COX6C, COX7A1 (or COX7A2), COX7B, COX7C, COX8B and NDUFA4, which are encoded in the nuclear genome. The complex exists as a monomer or a dimer and forms supercomplexes (SCs) in the inner mitochondrial membrane with NADH-ubiquinone oxidoreductase (complex I, CI) and ubiquinol-cytochrome c oxidoreductase (cytochrome b-c1 complex, complex III, CIII), resulting in different assemblies (supercomplex SCI(1)III(2)IV(1) and megacomplex MCI(2)III(2)IV(2)).

The protein localises to the mitochondrion inner membrane. It functions in the pathway energy metabolism; oxidative phosphorylation. Its function is as follows. Component of the cytochrome c oxidase, the last enzyme in the mitochondrial electron transport chain which drives oxidative phosphorylation. The respiratory chain contains 3 multisubunit complexes succinate dehydrogenase (complex II, CII), ubiquinol-cytochrome c oxidoreductase (cytochrome b-c1 complex, complex III, CIII) and cytochrome c oxidase (complex IV, CIV), that cooperate to transfer electrons derived from NADH and succinate to molecular oxygen, creating an electrochemical gradient over the inner membrane that drives transmembrane transport and the ATP synthase. Cytochrome c oxidase is the component of the respiratory chain that catalyzes the reduction of oxygen to water. Electrons originating from reduced cytochrome c in the intermembrane space (IMS) are transferred via the dinuclear copper A center (CU(A)) of subunit 2 and heme A of subunit 1 to the active site in subunit 1, a binuclear center (BNC) formed by heme A3 and copper B (CU(B)). The BNC reduces molecular oxygen to 2 water molecules unsing 4 electrons from cytochrome c in the IMS and 4 protons from the mitochondrial matrix. This is Cytochrome c oxidase subunit 6A1, mitochondrial (COX6A1) from Bos taurus (Bovine).